The primary structure comprises 969 residues: RNA polymerase-associated protein RapA (969 aa).

A Helicase ATP-binding domain is found at 164 to 334 (EVGRRHAPRV…FARLRLLDPD (171 aa)). 177-184 (DEVGLGKT) is a binding site for ATP. A DEAH box motif is present at residues 280–283 (DEAH). The Helicase C-terminal domain occupies 492–679 (RVNWLIEKIQ…ESAKLNQSLK (188 aa)).

The protein belongs to the SNF2/RAD54 helicase family. RapA subfamily. In terms of assembly, interacts with the RNAP. Has a higher affinity for the core RNAP than for the holoenzyme. Its ATPase activity is stimulated by binding to RNAP.

Functionally, transcription regulator that activates transcription by stimulating RNA polymerase (RNAP) recycling in case of stress conditions such as supercoiled DNA or high salt concentrations. Probably acts by releasing the RNAP, when it is trapped or immobilized on tightly supercoiled DNA. Does not activate transcription on linear DNA. Probably not involved in DNA repair. The sequence is that of RNA polymerase-associated protein RapA from Vibrio atlanticus (strain LGP32) (Vibrio splendidus (strain Mel32)).